Consider the following 88-residue polypeptide: MQFLVLALASLAAAAPSIKLRAPSDVCPALDTPLCCQADVLGVLDLTCEAPSDDTSVSNFEAACATTGLTARCCTLPLLGEALLCTTP.

An N-terminal signal peptide occupies residues 1 to 14 (MQFLVLALASLAAA). 4 cysteine pairs are disulfide-bonded: Cys-27–Cys-73, Cys-35–Cys-64, Cys-36–Cys-48, and Cys-74–Cys-85.

This sequence belongs to the cerato-ulmin hydrophobin family. As to quaternary structure, homotetramer. Further self-assembles to form highly ordered films at water-air interfaces through intermolecular interactions. Only appears on young aerial hyphae. HCf-5 is the most abundant transcript in sporulating mycelium.

The protein localises to the secreted. Its subcellular location is the cell wall. In terms of biological role, aerial growth, conidiation, and dispersal of filamentous fungi in the environment rely upon a capability of their secreting small amphipathic proteins called hydrophobins (HPBs) with low sequence identity. Class I can self-assemble into an outermost layer of rodlet bundles on aerial cell surfaces, conferring cellular hydrophobicity that supports fungal growth, development and dispersal; whereas Class II form highly ordered films at water-air interfaces through intermolecular interactions but contribute nothing to the rodlet structure. This is Class II hydrophobin 5 from Passalora fulva (Tomato leaf mold).